The sequence spans 219 residues: Octanoyltransferase (219 aa).

The BPL/LPL catalytic domain maps to 24–212; that stretch reads KFRRECILFL…NLNSFLGPIS (189 aa). Substrate-binding positions include 69-76, 140-142, and 153-155; these read RGGDFTAH, SIG, and GVA. The active-site Acyl-thioester intermediate is cysteine 171.

This sequence belongs to the LipB family.

The protein localises to the cytoplasm. The enzyme catalyses octanoyl-[ACP] + L-lysyl-[protein] = N(6)-octanoyl-L-lysyl-[protein] + holo-[ACP] + H(+). It participates in protein modification; protein lipoylation via endogenous pathway; protein N(6)-(lipoyl)lysine from octanoyl-[acyl-carrier-protein]: step 1/2. Catalyzes the transfer of endogenously produced octanoic acid from octanoyl-acyl-carrier-protein onto the lipoyl domains of lipoate-dependent enzymes. Lipoyl-ACP can also act as a substrate although octanoyl-ACP is likely to be the physiological substrate. The sequence is that of Octanoyltransferase from Leptospira borgpetersenii serovar Hardjo-bovis (strain JB197).